Reading from the N-terminus, the 507-residue chain is MAMASLARRKAYFLTRNISNSPTDAFRFSFSLTRGFASSGSDDNDVVIIGGGPGGYVAAIKAAQLGLKTTCIEKRGALGGTCLNVGCIPSKALLHSSHMYHEAKHVFANHGVKVSSVEVDLPAMLAQKDTAVKNLTRGVEGLFKKNKVNYVKGYGKFLSPSEVSVDTIDGENVVVKGKHIIVATGSDVKSLPGITIDEKKIVSSTGALSLTEIPKKLIVIGAGYIGLEMGSVWGRLGSEVTVVEFAADIVPAMDGEIRKQFQRSLEKQKMKFMLKTKVVGVDSSGDGVKLIVEPAEGGEQTTLEADVVLVSAGRTPFTSGLDLEKIGVETDKGGRILVNERFSTNVSGVYAIGDVIPGPMLAHKAEEDGVACVEFIAGKHGHVDYDKVPGVVYTYPEVASVGKTEEQLKKEGVSYNVGKFPFMANSRAKAIDTAEGMVKILADKETDKILGVHIMSPNAGELIHEAVLAINYDASSEDIARVCHAHPTMSEAIKEAAMATYDKPIHM.

The transit peptide at 1–36 (MAMASLARRKAYFLTRNISNSPTDAFRFSFSLTRGF) directs the protein to the mitochondrion. Residues 73-82 (EKRGALGGTC), lysine 91, glycine 155, and 184-186 (TGS) contribute to the FAD site. Cysteine 82 and cysteine 87 are oxidised to a cystine. NAD(+) contacts are provided by residues 221 to 228 (GAGYIGLE), glutamate 244, valine 278, and glycine 313. Residues aspartate 354 and 360-363 (MLAH) contribute to the FAD site. Histidine 486 serves as the catalytic Proton acceptor.

It belongs to the class-I pyridine nucleotide-disulfide oxidoreductase family. As to quaternary structure, homodimer. Part of both the glycine cleavage system composed of four proteins: P, T, L and H and of the pyruvate dehydrogenase complex containing multiple copies of three enzymatic components: pyruvate dehydrogenase (E1), dihydrolipoamide acetyltransferase (E2) and lipoamide dehydrogenase (E3). It depends on FAD as a cofactor. S-nytrosylated at unknown positions. As to expression, preferentially expressed in roots, flowers and siliques and at a lower level in stems and leaves.

Its subcellular location is the mitochondrion matrix. It carries out the reaction N(6)-[(R)-dihydrolipoyl]-L-lysyl-[protein] + NAD(+) = N(6)-[(R)-lipoyl]-L-lysyl-[protein] + NADH + H(+). Its function is as follows. Lipoamide dehydrogenase is a component of the glycine decarboxylase (GDC) or glycine cleavage system as well as of the alpha-ketoacid dehydrogenase complexes. LPD1 is probably the protein most often associated with the glycine decarboxylase complex while LPD2 is probably incorporated into alpha-ketoacid dehydrogenase complexes. The protein is Dihydrolipoyl dehydrogenase 2, mitochondrial (LPD2) of Arabidopsis thaliana (Mouse-ear cress).